A 518-amino-acid chain; its full sequence is Light-independent protochlorophyllide reductase subunit B (518 aa).

Position 36 (aspartate 36) interacts with [4Fe-4S] cluster. The active-site Proton donor is aspartate 285. Residue 420-421 (GL) participates in substrate binding.

It belongs to the ChlB/BchB/BchZ family. As to quaternary structure, protochlorophyllide reductase is composed of three subunits; BchL, BchN and BchB. Forms a heterotetramer of two BchB and two BchN subunits. [4Fe-4S] cluster serves as cofactor.

It carries out the reaction chlorophyllide a + oxidized 2[4Fe-4S]-[ferredoxin] + 2 ADP + 2 phosphate = protochlorophyllide a + reduced 2[4Fe-4S]-[ferredoxin] + 2 ATP + 2 H2O. The protein operates within porphyrin-containing compound metabolism; bacteriochlorophyll biosynthesis (light-independent). Component of the dark-operative protochlorophyllide reductase (DPOR) that uses Mg-ATP and reduced ferredoxin to reduce ring D of protochlorophyllide (Pchlide) to form chlorophyllide a (Chlide). This reaction is light-independent. The NB-protein (BchN-BchB) is the catalytic component of the complex. The chain is Light-independent protochlorophyllide reductase subunit B from Bradyrhizobium sp. (strain ORS 278).